Here is a 555-residue protein sequence, read N- to C-terminus: Probable beta-glucosidase btgE (555 aa).

A signal peptide spans 1 to 18 (MRGAILATAAAFAGTAVA). 2 disordered regions span residues 92–114 (TSSA…VTLP) and 263–290 (TTSA…PTGA). The segment covering 263-288 (TTSAASTTTAVPSSSTTTSSATSVPT) has biased composition (low complexity). Glu392 serves as the catalytic Proton donor. The active-site Nucleophile is the Glu488.

This sequence belongs to the glycosyl hydrolase 17 family.

The protein resides in the secreted. It localises to the cell wall. It catalyses the reaction Hydrolysis of terminal, non-reducing beta-D-glucosyl residues with release of beta-D-glucose.. It functions in the pathway glycan metabolism; cellulose degradation. Functionally, beta-glucosidases are one of a number of cellulolytic enzymes involved in the degradation of cellulosic biomass. Catalyzes the last step releasing glucose from the inhibitory cellobiose. The polypeptide is Probable beta-glucosidase btgE (btgE) (Emericella nidulans (strain FGSC A4 / ATCC 38163 / CBS 112.46 / NRRL 194 / M139) (Aspergillus nidulans)).